The primary structure comprises 132 residues: Large ribosomal subunit protein bL17 (132 aa).

It belongs to the bacterial ribosomal protein bL17 family. Part of the 50S ribosomal subunit. Contacts protein L32.

The polypeptide is Large ribosomal subunit protein bL17 (Shewanella sediminis (strain HAW-EB3)).